A 100-amino-acid chain; its full sequence is Sec-independent protein translocase protein TatA (100 aa).

Residues M1–G21 traverse the membrane as a helical segment. A compositionally biased stretch (basic and acidic residues) spans K44–E55. Positions K44–S100 are disordered. Residues Q69–Y81 show a composition bias toward low complexity.

It belongs to the TatA/E family. As to quaternary structure, the Tat system comprises two distinct complexes: a TatABC complex, containing multiple copies of TatA, TatB and TatC subunits, and a separate TatA complex, containing only TatA subunits. Substrates initially bind to the TatABC complex, which probably triggers association of the separate TatA complex to form the active translocon.

Its subcellular location is the cell membrane. Part of the twin-arginine translocation (Tat) system that transports large folded proteins containing a characteristic twin-arginine motif in their signal peptide across membranes. TatA could form the protein-conducting channel of the Tat system. The polypeptide is Sec-independent protein translocase protein TatA (Salinispora arenicola (strain CNS-205)).